Consider the following 214-residue polypeptide: Putative AgrB-like protein 2 (214 aa).

5 consecutive transmembrane segments (helical) span residues 41-61, 83-103, 109-129, 154-174, and 179-199; these read IISVLILGLVFNIALEALIFL, TLLGIIISICIGFLIKSSFFA, LVVFIGIVIFVFGYFIVFKFA, ILTIYLFIEVLSIILYYNSGW, and PVMLSIIFGVAWQCMTLTYIG.

The protein belongs to the AgrB family.

It localises to the cell membrane. Its function is as follows. May be involved in the proteolytic processing of a quorum sensing system signal molecule precursor. This chain is Putative AgrB-like protein 2, found in Clostridium perfringens (strain 13 / Type A).